We begin with the raw amino-acid sequence, 427 residues long: Tol-Pal system protein TolB (427 aa).

A signal peptide spans 1–23; that stretch reads MKLLKRLVSVFAIVLAVGSNAFA.

This sequence belongs to the TolB family. As to quaternary structure, the Tol-Pal system is composed of five core proteins: the inner membrane proteins TolA, TolQ and TolR, the periplasmic protein TolB and the outer membrane protein Pal. They form a network linking the inner and outer membranes and the peptidoglycan layer.

It localises to the periplasm. Part of the Tol-Pal system, which plays a role in outer membrane invagination during cell division and is important for maintaining outer membrane integrity. The sequence is that of Tol-Pal system protein TolB from Haemophilus influenzae (strain PittEE).